Here is a 501-residue protein sequence, read N- to C-terminus: DEAD-box ATP-dependent RNA helicase 36 (501 aa).

Positions 1 to 68 (MEVDGEARPF…AAAVTEHAGD (68 aa)) are disordered. Residues 36–46 (EEPPNPSPSPA) are compositionally biased toward pro residues. A compositionally biased stretch (low complexity) spans 59-68 (AAAVTEHAGD). Positions 77 to 105 (STFAELGLSQWLVDVCDSLGMRVPTAVQR) match the Q motif motif. Positions 108–281 (IPRALEGRDV…ELSGNNSYFF (174 aa)) constitute a Helicase ATP-binding domain. Residue 121-128 (AETGSGKT) coordinates ATP. A DEAD box motif is present at residues 229 to 232 (DEAD). Residues 292–456 (TLKQLYIHVP…AYDGEMRDVN (165 aa)) form the Helicase C-terminal domain. Positions 473–486 (MADEGHEDKVQARK) are enriched in basic and acidic residues. The disordered stretch occupies residues 473–501 (MADEGHEDKVQARKEQKKRAQERKRKHDE). The stretch at 475 to 501 (DEGHEDKVQARKEQKKRAQERKRKHDE) forms a coiled coil. Residues 487-501 (EQKKRAQERKRKHDE) show a composition bias toward basic residues.

It belongs to the DEAD box helicase family. DDX49/DBP8 subfamily.

It carries out the reaction ATP + H2O = ADP + phosphate + H(+). The polypeptide is DEAD-box ATP-dependent RNA helicase 36 (Oryza sativa subsp. japonica (Rice)).